Consider the following 300-residue polypeptide: Rhodopsin (300 aa).

At 1–18 (LHMIHLHWYQYPPMNPMM) the chain is on the extracellular side. Residues 19-43 (YPLLLVFMLITGILCLAGNFVTIWV) form a helical membrane-spanning segment. Over 44 to 55 (FMNTKSLRTPAN) the chain is Cytoplasmic. The helical transmembrane segment at 56–78 (LLVVNLAMSDFLMMFTMFPPMMV) threads the bilayer. Residues 79-92 (TCYYHTWTLGATFC) are Extracellular-facing. Cysteine 92 and cysteine 168 are oxidised to a cystine. The helical transmembrane segment at 93 to 115 (QVYAFLGNLCGCASIWTMVFITF) threads the bilayer. The 'Ionic lock' involved in activated form stabilization signature appears at 116-118 (DRY). At 116-134 (DRYNVIVKGVAGEPLSTKK) the chain is on the cytoplasmic side. The helical transmembrane segment at 135–155 (ASLWILTIWILSITWCIAPFF) threads the bilayer. At 156 to 181 (GWNRYVPEGNTGCGTDYLSEDILSRS) the chain is on the extracellular side. Residues 182 to 203 (YLYIYSTWVYFLPLAITIYCHV) form a helical membrane-spanning segment. Over 204 to 244 (FIIKAVAAHEKGMRDQAKKMGIKSLRNEEAQKTSAECRLAK) the chain is Cytoplasmic. Residues 245–266 (IAMTTVALWFIAWTPYLLINWV) form a helical membrane-spanning segment. Topologically, residues 267-277 (GMFARSYLSPV) are extracellular. Residues 278–299 (YTIWGYVFAKANAVYNPIVYAI) form a helical membrane-spanning segment. Lysine 287 bears the N6-(retinylidene)lysine mark.

It belongs to the G-protein coupled receptor 1 family. Opsin subfamily. As to quaternary structure, homodimer. Interacts with GNAQ. Contains one covalently linked retinal chromophore.

The protein resides in the cell projection. It localises to the rhabdomere membrane. Its function is as follows. Photoreceptor required for image-forming vision at low light intensity. Can use both retinal and 3-dehydroretinal as visual pigment. Light-induced isomerization of 11-cis to all-trans retinal triggers a conformational change that activates signaling via G-proteins. Signaling via GNAQ probably mediates the activation of phospholipase C. The protein is Rhodopsin (RHO) of Cambarus maculatus (Freckled crayfish).